Here is a 394-residue protein sequence, read N- to C-terminus: Cytochrome b (394 aa).

Transmembrane regions (helical) follow at residues 39 to 59 (FGSL…FLAM), 83 to 105 (WLLR…LHTF), 120 to 140 (VWCL…IGYV), and 186 to 206 (FFSL…LHLA). Heme b-binding residues include His-89 and His-103. Heme b is bound by residues His-191 and His-204. His-209 is a binding site for a ubiquinone. 4 helical membrane passes run 232–252 (FYVK…IWIF), 296–316 (AGGV…PFFK), 328–348 (IYQG…WIGC), and 355–374 (FVTI…AITP).

It belongs to the cytochrome b family. As to quaternary structure, the main subunits of complex b-c1 are: cytochrome b, cytochrome c1 and the Rieske protein. Heme b is required as a cofactor.

The protein localises to the mitochondrion inner membrane. Its function is as follows. Component of the ubiquinol-cytochrome c reductase complex (complex III or cytochrome b-c1 complex) that is part of the mitochondrial respiratory chain. The b-c1 complex mediates electron transfer from ubiquinol to cytochrome c. Contributes to the generation of a proton gradient across the mitochondrial membrane that is then used for ATP synthesis. The protein is Cytochrome b (MT-CYB) of Oenothera berteroana (Bertero's evening primrose).